Consider the following 346-residue polypeptide: N-acetyl-gamma-glutamyl-phosphate reductase (346 aa).

Residue C154 is part of the active site.

It belongs to the NAGSA dehydrogenase family. Type 1 subfamily.

Its subcellular location is the cytoplasm. The catalysed reaction is N-acetyl-L-glutamate 5-semialdehyde + phosphate + NADP(+) = N-acetyl-L-glutamyl 5-phosphate + NADPH + H(+). It functions in the pathway amino-acid biosynthesis; L-arginine biosynthesis; N(2)-acetyl-L-ornithine from L-glutamate: step 3/4. In terms of biological role, catalyzes the NADPH-dependent reduction of N-acetyl-5-glutamyl phosphate to yield N-acetyl-L-glutamate 5-semialdehyde. This Rhodopirellula baltica (strain DSM 10527 / NCIMB 13988 / SH1) protein is N-acetyl-gamma-glutamyl-phosphate reductase.